A 317-amino-acid chain; its full sequence is Acetyl-coenzyme A carboxylase carboxyl transferase subunit beta (317 aa).

The region spanning 30 to 299 (LWTKCVACTA…VLPPLNVREK (270 aa)) is the CoA carboxyltransferase N-terminal domain. The Zn(2+) site is built by Cys34, Cys37, Cys53, and Cys56. The C4-type zinc finger occupies 34–56 (CVACTALTYTKDLQANQLVCTEC).

Belongs to the AccD/PCCB family. As to quaternary structure, acetyl-CoA carboxylase is a heterohexamer composed of biotin carboxyl carrier protein (AccB), biotin carboxylase (AccC) and two subunits each of ACCase subunit alpha (AccA) and ACCase subunit beta (AccD). It depends on Zn(2+) as a cofactor.

It is found in the cytoplasm. The enzyme catalyses N(6)-carboxybiotinyl-L-lysyl-[protein] + acetyl-CoA = N(6)-biotinyl-L-lysyl-[protein] + malonyl-CoA. The protein operates within lipid metabolism; malonyl-CoA biosynthesis; malonyl-CoA from acetyl-CoA: step 1/1. In terms of biological role, component of the acetyl coenzyme A carboxylase (ACC) complex. Biotin carboxylase (BC) catalyzes the carboxylation of biotin on its carrier protein (BCCP) and then the CO(2) group is transferred by the transcarboxylase to acetyl-CoA to form malonyl-CoA. The sequence is that of Acetyl-coenzyme A carboxylase carboxyl transferase subunit beta from Crocosphaera subtropica (strain ATCC 51142 / BH68) (Cyanothece sp. (strain ATCC 51142)).